The following is a 174-amino-acid chain: uncharacterized protein (174 aa).

This sequence belongs to the NAD(P)H dehydrogenase (quinone) family.

This is an uncharacterized protein from Bacillus subtilis (strain 168).